The following is a 245-amino-acid chain: Probable phosphatase ECA2529 (245 aa).

Zn(2+) contacts are provided by H7, H9, H15, H40, E73, H101, H131, D192, and H194.

This sequence belongs to the PHP family. As to quaternary structure, homotrimer. The cofactor is Zn(2+).

This is Probable phosphatase ECA2529 from Pectobacterium atrosepticum (strain SCRI 1043 / ATCC BAA-672) (Erwinia carotovora subsp. atroseptica).